The sequence spans 515 residues: Tetratricopeptide repeat protein 8 (515 aa).

The stretch at 4-37 (EMEPLLRAWSYFRRRKFQLCADLCTQMLEKSPYD) is one TPR 1 repeat. 2 disordered regions span residues 89 to 109 (RPGT…TQAV) and 118 to 137 (PITG…TMEQ). 7 TPR repeats span residues 225–258 (WWWK…QEMV), 259–291 (DTFL…FPGE), 292–325 (VTLL…DNTH), 326–359 (VEAI…GVYN), 360–393 (CQLF…AENE), 397–430 (ADVW…NNHH), and 432–464 (EAYN…APHM).

Part of BBSome complex, that contains BBS1, BBS2, BBS4, BBS5, BBS7, BBS8/TTC8, BBS9 and BBIP10. Interacts with PCM1. Interacts with CCDC28B. Interacts with PKD1. In terms of tissue distribution, isoform 1 is retina-specific whereas isoform 2 is ubiquitously expressed.

It localises to the cytoplasm. Its subcellular location is the cytoskeleton. It is found in the microtubule organizing center. The protein resides in the centrosome. The protein localises to the centriole. It localises to the cell projection. Its subcellular location is the cilium membrane. It is found in the centriolar satellite. The protein resides in the cilium. In terms of biological role, the BBSome complex is thought to function as a coat complex required for sorting of specific membrane proteins to the primary cilia. The BBSome complex is required for ciliogenesis but is dispensable for centriolar satellite function. This ciliogenic function is mediated in part by the Rab8 GDP/GTP exchange factor, which localizes to the basal body and contacts the BBSome. Rab8(GTP) enters the primary cilium and promotes extension of the ciliary membrane. Firstly the BBSome associates with the ciliary membrane and binds to RAB3IP/Rabin8, the guanosyl exchange factor (GEF) for Rab8 and then the Rab8-GTP localizes to the cilium and promotes docking and fusion of carrier vesicles to the base of the ciliary membrane. The BBSome complex, together with the LTZL1, controls SMO ciliary trafficking and contributes to the sonic hedgehog (SHH) pathway regulation. Required for proper BBSome complex assembly and its ciliary localization. The chain is Tetratricopeptide repeat protein 8 (Ttc8) from Mus musculus (Mouse).